The sequence spans 462 residues: Gamma-aminobutyric acid receptor subunit alpha-5 (462 aa).

Positions 1–31 are cleaved as a signal peptide; it reads MDNGMFSSFIMIKNLLLFCISMNLASHFGFS. Over 32–260 the chain is Extracellular; the sequence is QMPTSSVKAE…FHLKRKIGYF (229 aa). An N-linked (GlcNAc...) asparagine glycan is attached at N45. R101 contributes to the 4-aminobutanoate binding site. N-linked (GlcNAc...) asparagine glycosylation occurs at N145. Position 164 (T164) interacts with 4-aminobutanoate. A disulfide bond links C173 and C187. 2 N-linked (GlcNAc...) asparagine glycosylation sites follow: N207 and N236. The next 3 helical transmembrane spans lie at 261-281, 287-308, and 319-340; these read VIQT…SFWL, PART…ISAR, and AMDW…EFAT. Residues 341–427 lie on the Cytoplasmic side of the membrane; the sequence is VNYFTKRGWA…TYNSISKIDK (87 aa). Residue K355 forms a Glycyl lysine isopeptide (Lys-Gly) (interchain with G-Cter in ubiquitin) linkage. The tract at residues 375 to 412 is disordered; sequence TNAYTTGKMTHPPNIPKEQTPAGTTNASSASVKPEDKA. A compositionally biased stretch (polar residues) spans 395 to 405; sequence PAGTTNASSAS. The chain crosses the membrane as a helical span at residues 428–448; the sequence is MSRIIFPLLFGTFNLVYWATY.

The protein belongs to the ligand-gated ion channel (TC 1.A.9) family. Gamma-aminobutyric acid receptor (TC 1.A.9.5) subfamily. GABRA5 sub-subfamily. Heteropentamer, formed by a combination of alpha (GABRA1-6), beta (GABRB1-3), gamma (GABRG1-3), delta (GABRD), epsilon (GABRE), rho (GABRR1-3), pi (GABRP) and theta (GABRQ) chains, each subunit exhibiting distinct physiological and pharmacological properties.

It localises to the postsynaptic cell membrane. The protein localises to the cell membrane. The enzyme catalyses chloride(in) = chloride(out). In terms of biological role, alpha subunit of the heteropentameric ligand-gated chloride channel gated by gamma-aminobutyric acid (GABA), a major inhibitory neurotransmitter in the brain. GABA-gated chloride channels, also named GABA(A) receptors (GABAAR), consist of five subunits arranged around a central pore and contain GABA active binding site(s) located at the alpha and beta subunit interface(s). When activated by GABA, GABAARs selectively allow the flow of chloride anions across the cell membrane down their electrochemical gradient. GABAARs containing alpha-5/GABRA5 subunits are mainly extrasynaptic and contribute to the tonic GABAergic inhibition in the hippocampus. Extrasynaptic alpha-5-containing GABAARs in CA1 pyramidal neurons play a role in learning and memory processes. The chain is Gamma-aminobutyric acid receptor subunit alpha-5 (GABRA5) from Bos taurus (Bovine).